Consider the following 204-residue polypeptide: Probable GTP-binding protein EngB (204 aa).

An EngB-type G domain is found at G22–I197. Residues G30 to S37, G57 to Q61, D75 to G78, N144 to D147, and F176 to A178 each bind GTP. Mg(2+) is bound by residues S37 and T59.

It belongs to the TRAFAC class TrmE-Era-EngA-EngB-Septin-like GTPase superfamily. EngB GTPase family. It depends on Mg(2+) as a cofactor.

Functionally, necessary for normal cell division and for the maintenance of normal septation. The protein is Probable GTP-binding protein EngB of Ruminiclostridium cellulolyticum (strain ATCC 35319 / DSM 5812 / JCM 6584 / H10) (Clostridium cellulolyticum).